We begin with the raw amino-acid sequence, 443 residues long: Tubulin epsilon and delta complex protein 2 (443 aa).

A coiled-coil region spans residues 8–33 (RRLVAELRDALDSCAERQRQLEQSLR). Disordered regions lie at residues 45-72 (AETP…PSPQ) and 93-146 (GLSK…PWVP). Residues 106–124 (LKSGSASTATKASAPPSTS) show a composition bias toward low complexity.

In terms of assembly, interacts with TEDC1. Found in a complex with TEDC1, TEDC2, TUBE1 and TUBD1.

Its subcellular location is the cell projection. The protein resides in the cilium. It is found in the cytoplasm. The protein localises to the cytoskeleton. It localises to the microtubule organizing center. Its subcellular location is the centrosome. The protein resides in the centriole. Functionally, acts as a positive regulator of ciliary hedgehog signaling. Required for centriole stability. This chain is Tubulin epsilon and delta complex protein 2, found in Bos taurus (Bovine).